Consider the following 105-residue polypeptide: N(4)-acetylcytidine amidohydrolase (105 aa).

One can recognise an ASCH domain in the interval 7-93; that stretch reads TFFERFEHDI…VIAEIYPGLE (87 aa). Lys21 functions as the Proton acceptor in the catalytic mechanism. Catalysis depends on Thr24, which acts as the Nucleophile. The Proton donor role is filled by Glu74.

The protein belongs to the N(4)-acetylcytidine amidohydrolase family.

It carries out the reaction N(4)-acetylcytidine + H2O = cytidine + acetate + H(+). The catalysed reaction is N(4)-acetyl-2'-deoxycytidine + H2O = 2'-deoxycytidine + acetate + H(+). It catalyses the reaction N(4)-acetylcytosine + H2O = cytosine + acetate + H(+). In terms of biological role, catalyzes the hydrolysis of N(4)-acetylcytidine (ac4C). This chain is N(4)-acetylcytidine amidohydrolase, found in Shewanella baltica (strain OS195).